The primary structure comprises 284 residues: MLATKAKAYWQLTRMNRPIGTLLLLWPTLWSLIIAAKGMPDFDVLVVFILGVVLMRSAGCVINDFADRKVDGHVKRTKQRPLPSGLVSSKEAIVLFLVLAVVSFLLVLTMNPLTIKLSFIGVGLAFIYPFMKRFTHLPQLFLGLAFSWAIPMAWAAQTNELPSIVWFIFVINALWTIAYDTQYAMVDRDDDLKIGIKSTAILFGRFDKLMVGALQLVTLAMLIALGMHYQLGDTFYWALLVSGSLFVYQQHLMRHRDRDLCFQAFLNNNYVGMAVTVGLFITFW.

Helical transmembrane passes span 19–39 (IGTLLLLWPTLWSLIIAAKGM), 42–62 (FDVLVVFILGVVLMRSAGCVI), 93–113 (IVLFLVLAVVSFLLVLTMNPL), 114–134 (TIKLSFIGVGLAFIYPFMKRF), 136–156 (HLPQLFLGLAFSWAIPMAWAA), 161–181 (LPSIVWFIFVINALWTIAYDT), 209–229 (LMVGALQLVTLAMLIALGMHY), 235–252 (FYWALLVSGSLFVYQQHL), and 264–284 (AFLNNNYVGMAVTVGLFITFW).

This sequence belongs to the UbiA prenyltransferase family. The cofactor is Mg(2+).

The protein resides in the cell inner membrane. The catalysed reaction is all-trans-octaprenyl diphosphate + 4-hydroxybenzoate = 4-hydroxy-3-(all-trans-octaprenyl)benzoate + diphosphate. Its pathway is cofactor biosynthesis; ubiquinone biosynthesis. Its function is as follows. Catalyzes the prenylation of para-hydroxybenzoate (PHB) with an all-trans polyprenyl group. Mediates the second step in the final reaction sequence of ubiquinone-8 (UQ-8) biosynthesis, which is the condensation of the polyisoprenoid side chain with PHB, generating the first membrane-bound Q intermediate 3-octaprenyl-4-hydroxybenzoate. This chain is 4-hydroxybenzoate octaprenyltransferase, found in Vibrio atlanticus (strain LGP32) (Vibrio splendidus (strain Mel32)).